We begin with the raw amino-acid sequence, 270 residues long: Molybdenum-pterin-binding protein MopB (270 aa).

Mop domains are found at residues Arg-131–Gly-197 and Arg-203–Leu-269.

It belongs to the ModE family.

The chain is Molybdenum-pterin-binding protein MopB (mopB) from Rhodobacter capsulatus (Rhodopseudomonas capsulata).